Here is an 83-residue protein sequence, read N- to C-terminus: Large ribosomal subunit protein bL27 (83 aa).

The interval 1–21 (MAHKRSSGAGRNGRDSNPKYL) is disordered.

It belongs to the bacterial ribosomal protein bL27 family.

The sequence is that of Large ribosomal subunit protein bL27 from Kosmotoga olearia (strain ATCC BAA-1733 / DSM 21960 / TBF 19.5.1).